Reading from the N-terminus, the 730-residue chain is Denticleless protein homolog (730 aa).

Met1 is subject to N-acetylmethionine. WD repeat units follow at residues 47–89, 96–135, and 138–178; these read GVPV…FRKK, AHWN…LIGT, and GHQC…KDGF. The short motif at 168–171 is the DDB1-binding motif element; sequence WDTR. Positions 188–198 are enriched in polar residues; that stretch reads AHNTSDKQTPS. The segment at 188–210 is disordered; that stretch reads AHNTSDKQTPSKPKKKQNSKGLA. Thr196 is subject to Phosphothreonine. Residues 197-203 carry the Nuclear localization signal motif; that stretch reads PSKPKKK. WD repeat units lie at residues 214–253, 267–308, 313–354, and 358–398; these read DFQQ…TAYR, SSTR…TSPV, GHQN…QPPT, and GHSQ…EEKP. Residues 243 to 246 carry the DDB1-binding motif motif; the sequence is WDLR. The disordered stretch occupies residues 399 to 443; the sequence is GGDKLSTVGWASQKKKESRPGLVTVTSSQSTPAKAPRAKCNPSNS. Ser410 and Ser426 each carry phosphoserine. At Thr464 the chain carries Phosphothreonine; by CDK1 and CDK2. Positions 465–498 are disordered; that stretch reads PTFSIKTSPAKARSPINRRGSVSSVSPKPPSSFK. Phosphoserine is present on residues Ser485, Ser490, Ser495, and Ser512. Thr516 is subject to Phosphothreonine. A Phosphoserine modification is found at Ser557. 2 disordered regions span residues 599 to 631 and 644 to 703; these read SKDS…YASE and GEGS…TITP. Phosphoserine occurs at positions 676 and 679. Polar residues predominate over residues 679–689; it reads SPSSQTPNSRR. A phosphothreonine mark is found at Thr684 and Thr702. Ser717 is subject to Phosphoserine.

This sequence belongs to the WD repeat cdt2 family. In terms of assembly, component of the DCX(DTL) E3 ubiquitin ligase complex (also called CRL4(CDT2)), at least composed of CUL4 (CUL4A or CUL4B), DDB1, DTL/CDT2 and RBX1. Interacts with CDKN1A. Interacts with DDB1. Interacts with FBXO11; SCF(FBXWO11) controls DTL stability but DCX(DTL) does not control FBXO11 stability. Interacts with CRY1. Post-translationally, ubiquitinated by the anaphase promoting complex/cyclosome (APC/C). Autoubiquitinated through 'Lys-48'-polyubiquitin chains in a PCNA-independent reaction, allowing proteasomal turnover. Polyubiquitinated by SCF(FBXO11) when not phosphorylated, leading to its degradation. A tight regulation of the polyubiquitination by SCF(FBXO11) is involved in the control of different processes such as TGF-beta signaling, cell cycle progression and exit. In terms of processing, phosphorylated at Thr-464 by CDK1/Cyclin-B and CDK2/Cyclin-A but not by CDK2/Cyclin-E, MAPK1 or PLK1. Phosphorylation at Thr-464 inhibits the interaction with FBXO11 and decreases upon cell cycle exit induced by TGF-beta or serum starvation. Expressed in placenta and testis, very low expression seen in skeletal muscle. Detected in all hematopoietic tissues examined, with highest expression in thymus and bone marrow. A low level detected in the spleen and lymph node, and barely detectable level in the peripheral leukocytes. RA treatment down-regulated the expression in NT2 cell.

It is found in the nucleus. The protein resides in the nucleus membrane. The protein localises to the cytoplasm. Its subcellular location is the cytoskeleton. It localises to the microtubule organizing center. It is found in the centrosome. The protein resides in the chromosome. Its pathway is protein modification; protein ubiquitination. Substrate-specific adapter of a DCX (DDB1-CUL4-X-box) E3 ubiquitin-protein ligase complex required for cell cycle control, DNA damage response and translesion DNA synthesis. The DCX(DTL) complex, also named CRL4(CDT2) complex, mediates the polyubiquitination and subsequent degradation of CDT1, CDKN1A/p21(CIP1), FBH1, KMT5A and SDE2. CDT1 degradation in response to DNA damage is necessary to ensure proper cell cycle regulation of DNA replication. CDKN1A/p21(CIP1) degradation during S phase or following UV irradiation is essential to control replication licensing. KMT5A degradation is also important for a proper regulation of mechanisms such as TGF-beta signaling, cell cycle progression, DNA repair and cell migration. Most substrates require their interaction with PCNA for their polyubiquitination: substrates interact with PCNA via their PIP-box, and those containing the 'K+4' motif in the PIP box, recruit the DCX(DTL) complex, leading to their degradation. In undamaged proliferating cells, the DCX(DTL) complex also promotes the 'Lys-164' monoubiquitination of PCNA, thereby being involved in PCNA-dependent translesion DNA synthesis. The DDB1-CUL4A-DTL E3 ligase complex regulates the circadian clock function by mediating the ubiquitination and degradation of CRY1. The polypeptide is Denticleless protein homolog (DTL) (Homo sapiens (Human)).